The chain runs to 188 residues: Multiple organellar RNA editing factor 7, mitochondrial (188 aa).

Residues 1–20 (MARIIRRPLNLTAAVRFRLS) constitute a mitochondrion transit peptide. The segment at 169-188 (DAKSGVVKKKHRRKRKKKLI) is disordered. Basic residues predominate over residues 174 to 188 (VVKKKHRRKRKKKLI).

The protein belongs to the MORF family. Heterodimers with MORF8/RIP1, MORF5/RIP5 and MORF6/RIP6.

It localises to the mitochondrion. Involved in organellar RNA editing. Required for the processing of few RNA editing sites in mitochondria. In Arabidopsis thaliana (Mouse-ear cress), this protein is Multiple organellar RNA editing factor 7, mitochondrial.